A 261-amino-acid chain; its full sequence is Probable RNA-binding protein ARP1 (261 aa).

The RRM domain occupies 17–94 (TKVFVGGLAW…RRANCNLASL (78 aa)). The tract at residues 96 to 122 (GRLRKSPTMTSPQQGPKNGNRATPPHV) is disordered. Positions 102-116 (PTMTSPQQGPKNGNR) are enriched in polar residues.

As to expression, expressed in vasculature of leaves, roots and siliques.

The protein localises to the nucleus. Probable RNA-binding protein involved in the regulation of abscisic acid (ABA) response during seed germination. May regulate transcript levels of several germination-responsive genes under ABA. In Arabidopsis thaliana (Mouse-ear cress), this protein is Probable RNA-binding protein ARP1.